Here is a 165-residue protein sequence, read N- to C-terminus: Basic leucine zipper 43 (165 aa).

The bZIP domain occupies 70–133 (NERKQKRKIS…EKVIEENVQL (64 aa)). The segment at 72–93 (RKQKRKISNRESARRSRMRKQR) is basic motif. Residues 98–112 (LWSQVMWLRDENHQL) are leucine-zipper.

In terms of assembly, forms heterodimers with BZIP34 and BZIP61.

The protein resides in the nucleus. Functionally, probable transcription factor involved in somatic embryogenesis. Acts as a positive regulator of BHLH109. The polypeptide is Basic leucine zipper 43 (Arabidopsis thaliana (Mouse-ear cress)).